The primary structure comprises 766 residues: Phosphoribosylformylglycinamidine synthase subunit PurL (766 aa).

His66 is an active-site residue. ATP contacts are provided by Tyr69 and Lys113. Residue Glu115 coordinates Mg(2+). Residues 116-119 and Arg138 each bind substrate; that span reads SHNH. Catalysis depends on His117, which acts as the Proton acceptor. Mg(2+) is bound at residue Asp139. Gln264 lines the substrate pocket. Asp292 is a binding site for Mg(2+). 336-338 lines the substrate pocket; sequence ESQ. ATP is bound by residues Asn524 and Gly561. Asn562 provides a ligand contact to Mg(2+). Ser564 contributes to the substrate binding site.

It belongs to the FGAMS family. In terms of assembly, monomer. Part of the FGAM synthase complex composed of 1 PurL, 1 PurQ and 2 PurS subunits.

It is found in the cytoplasm. It carries out the reaction N(2)-formyl-N(1)-(5-phospho-beta-D-ribosyl)glycinamide + L-glutamine + ATP + H2O = 2-formamido-N(1)-(5-O-phospho-beta-D-ribosyl)acetamidine + L-glutamate + ADP + phosphate + H(+). It participates in purine metabolism; IMP biosynthesis via de novo pathway; 5-amino-1-(5-phospho-D-ribosyl)imidazole from N(2)-formyl-N(1)-(5-phospho-D-ribosyl)glycinamide: step 1/2. Functionally, part of the phosphoribosylformylglycinamidine synthase complex involved in the purines biosynthetic pathway. Catalyzes the ATP-dependent conversion of formylglycinamide ribonucleotide (FGAR) and glutamine to yield formylglycinamidine ribonucleotide (FGAM) and glutamate. The FGAM synthase complex is composed of three subunits. PurQ produces an ammonia molecule by converting glutamine to glutamate. PurL transfers the ammonia molecule to FGAR to form FGAM in an ATP-dependent manner. PurS interacts with PurQ and PurL and is thought to assist in the transfer of the ammonia molecule from PurQ to PurL. In Mycobacterium bovis (strain BCG / Pasteur 1173P2), this protein is Phosphoribosylformylglycinamidine synthase subunit PurL.